We begin with the raw amino-acid sequence, 268 residues long: Small ribosomal subunit protein eS1 (268 aa).

Belongs to the eukaryotic ribosomal protein eS1 family. In terms of assembly, component of the small ribosomal subunit. Mature ribosomes consist of a small (40S) and a large (60S) subunit. The 40S subunit contains about 33 different proteins and 1 molecule of RNA (18S). The 60S subunit contains about 49 different proteins and 3 molecules of RNA (28S, 5.8S and 5S).

It is found in the cytoplasm. This is Small ribosomal subunit protein eS1 from Artemia franciscana (Brine shrimp).